Here is a 418-residue protein sequence, read N- to C-terminus: ATP-dependent RNA helicase RhlB (418 aa).

A Q motif motif is present at residues Thr9–Ala37. A Helicase ATP-binding domain is found at Leu40–Ile219. Ala53–Thr60 is a binding site for ATP. The DEAD box motif lies at Asp165–Asp168. A Helicase C-terminal domain is found at Lys243–Leu390.

Belongs to the DEAD box helicase family. RhlB subfamily. Component of the RNA degradosome, which is a multiprotein complex involved in RNA processing and mRNA degradation.

It localises to the cytoplasm. It carries out the reaction ATP + H2O = ADP + phosphate + H(+). Its function is as follows. DEAD-box RNA helicase involved in RNA degradation. Has RNA-dependent ATPase activity and unwinds double-stranded RNA. This Psychromonas ingrahamii (strain DSM 17664 / CCUG 51855 / 37) protein is ATP-dependent RNA helicase RhlB.